We begin with the raw amino-acid sequence, 182 residues long: ATP-dependent protease subunit HslV (182 aa).

The active site involves Thr-12. Na(+) contacts are provided by Ala-167, Cys-170, and Thr-173.

Belongs to the peptidase T1B family. HslV subfamily. In terms of assembly, a double ring-shaped homohexamer of HslV is capped on each side by a ring-shaped HslU homohexamer. The assembly of the HslU/HslV complex is dependent on binding of ATP.

Its subcellular location is the cytoplasm. The catalysed reaction is ATP-dependent cleavage of peptide bonds with broad specificity.. Allosterically activated by HslU binding. Functionally, protease subunit of a proteasome-like degradation complex believed to be a general protein degrading machinery. The polypeptide is ATP-dependent protease subunit HslV (Prosthecochloris aestuarii (strain DSM 271 / SK 413)).